We begin with the raw amino-acid sequence, 344 residues long: Phosphoribosylformylglycinamidine cyclo-ligase (344 aa).

It belongs to the AIR synthase family.

The protein localises to the cytoplasm. It catalyses the reaction 2-formamido-N(1)-(5-O-phospho-beta-D-ribosyl)acetamidine + ATP = 5-amino-1-(5-phospho-beta-D-ribosyl)imidazole + ADP + phosphate + H(+). The protein operates within purine metabolism; IMP biosynthesis via de novo pathway; 5-amino-1-(5-phospho-D-ribosyl)imidazole from N(2)-formyl-N(1)-(5-phospho-D-ribosyl)glycinamide: step 2/2. The chain is Phosphoribosylformylglycinamidine cyclo-ligase from Haemophilus influenzae (strain 86-028NP).